A 373-amino-acid chain; its full sequence is Dual-specificity RNA methyltransferase RlmN (373 aa).

The Proton acceptor role is filled by glutamate 94. In terms of domain architecture, Radical SAM core spans 100–339 (EDDRATLCVS…VIVRKTRGDD (240 aa)). Cysteine 107 and cysteine 344 are disulfide-bonded. [4Fe-4S] cluster is bound by residues cysteine 114, cysteine 118, and cysteine 121. Residues 168 to 169 (GE), serine 200, 222 to 224 (SIH), and asparagine 301 each bind S-adenosyl-L-methionine. The active-site S-methylcysteine intermediate is the cysteine 344.

The protein belongs to the radical SAM superfamily. RlmN family. The cofactor is [4Fe-4S] cluster.

Its subcellular location is the cytoplasm. It catalyses the reaction adenosine(2503) in 23S rRNA + 2 reduced [2Fe-2S]-[ferredoxin] + 2 S-adenosyl-L-methionine = 2-methyladenosine(2503) in 23S rRNA + 5'-deoxyadenosine + L-methionine + 2 oxidized [2Fe-2S]-[ferredoxin] + S-adenosyl-L-homocysteine. The catalysed reaction is adenosine(37) in tRNA + 2 reduced [2Fe-2S]-[ferredoxin] + 2 S-adenosyl-L-methionine = 2-methyladenosine(37) in tRNA + 5'-deoxyadenosine + L-methionine + 2 oxidized [2Fe-2S]-[ferredoxin] + S-adenosyl-L-homocysteine. Its function is as follows. Specifically methylates position 2 of adenine 2503 in 23S rRNA and position 2 of adenine 37 in tRNAs. m2A2503 modification seems to play a crucial role in the proofreading step occurring at the peptidyl transferase center and thus would serve to optimize ribosomal fidelity. In Shewanella baltica (strain OS185), this protein is Dual-specificity RNA methyltransferase RlmN.